A 452-amino-acid chain; its full sequence is tRNA modification GTPase MnmE (452 aa).

(6S)-5-formyl-5,6,7,8-tetrahydrofolate is bound by residues Arg-21, Glu-78, and Lys-118. Residues 214–375 (GMKVVIAGRP…LREHLKKSMG (162 aa)) enclose the TrmE-type G domain. Asn-224 serves as a coordination point for K(+). Residues 224–229 (NAGKSS), 243–249 (TNIAGTT), and 268–271 (DTAG) contribute to the GTP site. Ser-228 is a binding site for Mg(2+). K(+) is bound by residues Thr-243, Ile-245, and Thr-248. Position 249 (Thr-249) interacts with Mg(2+). Lys-452 provides a ligand contact to (6S)-5-formyl-5,6,7,8-tetrahydrofolate.

It belongs to the TRAFAC class TrmE-Era-EngA-EngB-Septin-like GTPase superfamily. TrmE GTPase family. In terms of assembly, homodimer. Heterotetramer of two MnmE and two MnmG subunits. Requires K(+) as cofactor.

It is found in the cytoplasm. Exhibits a very high intrinsic GTPase hydrolysis rate. Involved in the addition of a carboxymethylaminomethyl (cmnm) group at the wobble position (U34) of certain tRNAs, forming tRNA-cmnm(5)s(2)U34. This chain is tRNA modification GTPase MnmE, found in Actinobacillus pleuropneumoniae serotype 5b (strain L20).